The primary structure comprises 633 residues: Probable potassium transport system protein Kup 3 (633 aa).

11 helical membrane-spanning segments follow: residues 61-81 (LVSL…VLFL), 107-127 (PVLM…DAMI), 143-163 (VAPA…LLLF), 173-193 (VSVF…AAGV), 211-231 (AIGF…AIFL), 255-275 (WFAV…ALVL), 287-307 (LMFP…GTII), 345-365 (IYLP…MLMF), 371-391 (LAPA…ILAF), 402-422 (ALTA…FLGA), and 427-447 (IHHG…MMWT).

Belongs to the HAK/KUP transporter (TC 2.A.72) family.

The protein resides in the cell inner membrane. The enzyme catalyses K(+)(in) + H(+)(in) = K(+)(out) + H(+)(out). In terms of biological role, transport of potassium into the cell. Likely operates as a K(+):H(+) symporter. The chain is Probable potassium transport system protein Kup 3 from Sinorhizobium medicae (strain WSM419) (Ensifer medicae).